Reading from the N-terminus, the 588-residue chain is Aspartate--tRNA ligase (588 aa).

E177 is a binding site for L-aspartate. An aspartate region spans residues 201–204; that stretch reads QLFK. R223 contacts L-aspartate. Residues 223–225 and Q232 contribute to the ATP site; that span reads RDE. Residue H451 participates in L-aspartate binding. Position 485 (E485) interacts with ATP. An L-aspartate-binding site is contributed by R492. ATP is bound at residue 537-540; sequence GLDR.

The protein belongs to the class-II aminoacyl-tRNA synthetase family. Type 1 subfamily. As to quaternary structure, homodimer.

It is found in the cytoplasm. The enzyme catalyses tRNA(Asp) + L-aspartate + ATP = L-aspartyl-tRNA(Asp) + AMP + diphosphate. Its function is as follows. Catalyzes the attachment of L-aspartate to tRNA(Asp) in a two-step reaction: L-aspartate is first activated by ATP to form Asp-AMP and then transferred to the acceptor end of tRNA(Asp). The sequence is that of Aspartate--tRNA ligase from Staphylococcus aureus (strain MRSA252).